We begin with the raw amino-acid sequence, 442 residues long: U11/U12 small nuclear ribonucleoprotein 65 kDa protein (442 aa).

The RRM 1 domain maps to 28 to 102 (VTLLVRHLPD…KVLQVQRANK (75 aa)). Disordered stretches follow at residues 101–138 (NKPN…QILS), 200–242 (LALP…GRKR), and 290–317 (SKVT…DSNL). Over residues 102 to 116 (KPNDNKKSRQIEESV) the composition is skewed to basic and acidic residues. Positions 117-136 (TKGNAFSTVSTNNDSKSGQI) are enriched in polar residues. Over residues 200 to 209 (LALPTPPLPK) the composition is skewed to pro residues. The span at 297–307 (YKEESENEDPA) shows a compositional bias: acidic residues. Residues 352–434 (VVLYIKNLAK…KPMIIQFGRT (83 aa)) form the RRM 2 domain.

As to quaternary structure, component of the U11/U12 snRNPs that are part of the U12-type spliceosome. Forms a complex with U12 snRNA. As to expression, ubiquitous.

The protein localises to the nucleus. Functionally, component of minor spliceosome required for U12-type intron splicing and alternative splicing of many introns. Binds specifically to U12 snRNA, which is necessary for branch-point site recognition. Required for normal plant development. The chain is U11/U12 small nuclear ribonucleoprotein 65 kDa protein (SNRNP65) from Arabidopsis thaliana (Mouse-ear cress).